A 482-amino-acid chain; its full sequence is Glycogen synthase (482 aa).

Residue Lys20 coordinates ADP-alpha-D-glucose.

Belongs to the glycosyltransferase 1 family. Bacterial/plant glycogen synthase subfamily.

The catalysed reaction is [(1-&gt;4)-alpha-D-glucosyl](n) + ADP-alpha-D-glucose = [(1-&gt;4)-alpha-D-glucosyl](n+1) + ADP + H(+). It participates in glycan biosynthesis; glycogen biosynthesis. Functionally, synthesizes alpha-1,4-glucan chains using ADP-glucose. The protein is Glycogen synthase of Aliivibrio salmonicida (strain LFI1238) (Vibrio salmonicida (strain LFI1238)).